Here is an 88-residue protein sequence, read N- to C-terminus: uncharacterized protein (88 aa).

This is an uncharacterized protein from Homo sapiens (Human).